The chain runs to 587 residues: Lamin-B1 (587 aa).

A compositionally biased stretch (polar residues) spans 1-11; that stretch reads MATATPVQQRA. Residues 1 to 29 form a disordered region; it reads MATATPVQQRAGSRASAPATPFSPTRLSR. Residue Ala-2 is modified to N-acetylalanine. The tract at residues 2-34 is head; it reads ATATPVQQRAGSRASAPATPFSPTRLSRLQEKE. Thr-3 and Thr-5 each carry phosphothreonine. Arg-14 carries the omega-N-methylarginine modification. Ser-16 is subject to Phosphoserine. Thr-20 bears the Phosphothreonine mark. Ser-23 is modified (phosphoserine). Phosphothreonine is present on Thr-25. Position 28 is a phosphoserine (Ser-28). The 357-residue stretch at 32-388 folds into the IF rod domain; that stretch reads EKEELRELND…KLLEGEEERL (357 aa). The interval 35-69 is coil 1A; it reads ELRELNDRLAVYIDKVRSLETENSALQLQVTEREE. Residues 70 to 81 form a linker 1 region; the sequence is VRGRELTGLKAL. The segment at 82–215 is coil 1B; the sequence is YETELADARR…EFRKNMYEEE (134 aa). A Glycyl lysine isopeptide (Lys-Gly) (interchain with G-Cter in SUMO2) cross-link involves residue Lys-102. Lys-111 is subject to N6-acetyllysine. A Glycyl lysine isopeptide (Lys-Gly) (interchain with G-Cter in SUMO2) cross-link involves residue Lys-123. Residue Ser-126 is modified to Phosphoserine. Lys-145 is covalently cross-linked (Glycyl lysine isopeptide (Lys-Gly) (interchain with G-Cter in SUMO2)). An N6-acetyllysine; alternate modification is found at Lys-157. A Glycyl lysine isopeptide (Lys-Gly) (interchain with G-Cter in SUMO2); alternate cross-link involves residue Lys-157. Ser-158 is modified (phosphoserine). Lys-181 is covalently cross-linked (Glycyl lysine isopeptide (Lys-Gly) (interchain with G-Cter in SUMO2)). 2 positions are modified to phosphoserine: Ser-200 and Ser-232. The tract at residues 216–243 is linker 2; it reads INETRRKHETRLVEVDSGRQIEYEYKLA. Glycyl lysine isopeptide (Lys-Gly) (interchain with G-Cter in SUMO2) cross-links involve residues Lys-241 and Lys-261. Positions 244–386 are coil 2; sequence QALHEMREQH…YRKLLEGEEE (143 aa). The residue at position 271 (Lys-271) is an N6-acetyllysine; alternate. Lys-271 is covalently cross-linked (Glycyl lysine isopeptide (Lys-Gly) (interchain with G-Cter in SUMO2); alternate). Phosphoserine occurs at positions 278 and 302. Lys-312 participates in a covalent cross-link: Glycyl lysine isopeptide (Lys-Gly) (interchain with G-Cter in SUMO2). Lys-330 is subject to N6-acetyllysine; alternate. Lys-330 participates in a covalent cross-link: Glycyl lysine isopeptide (Lys-Gly) (interchain with G-Cter in SUMO2); alternate. 2 positions are modified to phosphoserine: Ser-375 and Ser-393. Residues 387–587 are tail; that stretch reads RLKLSPSPSS…RASNKSCAIM (201 aa). Residues 390 to 409 are compositionally biased toward low complexity; sequence LSPSPSSRVTVSRASSSRSV. The segment at 390-432 is disordered; the sequence is LSPSPSSRVTVSRASSSRSVRTTRGKRKRVDVEESEASSSVSI. Residue Thr-399 is glycosylated (O-linked (GlcNAc) threonine). Arg-413 bears the Omega-N-methylarginine mark. Residues 415-420 carry the Nuclear localization signal motif; the sequence is KRKRVD. One can recognise an LTD domain in the interval 430–546; sequence VSISHSASAT…EEVAQRSTVF (117 aa). The residue at position 483 (Lys-483) is an N6-acetyllysine. Lys-532 is covalently cross-linked (Glycyl lysine isopeptide (Lys-Gly) (interchain with G-Cter in SUMO2)). Ser-534 carries the phosphoserine modification. Lys-547 participates in a covalent cross-link: Glycyl lysine isopeptide (Lys-Gly) (interchain with G-Cter in SUMO2). The segment at 550–587 is disordered; the sequence is IPEEEEEEEEEPIGVPLEEERFHQQGTPRASNKSCAIM. A compositionally biased stretch (acidic residues) spans 551–561; the sequence is PEEEEEEEEEP. Over residues 573 to 587 the composition is skewed to polar residues; sequence QQGTPRASNKSCAIM. Residue Thr-576 is modified to Phosphothreonine. The residue at position 584 (Cys-584) is a Cysteine methyl ester. The S-farnesyl cysteine moiety is linked to residue Cys-584. Positions 585–587 are cleaved as a propeptide — removed in mature form; sequence AIM.

Belongs to the intermediate filament family. Homodimer. Lamin dimers then assemble into dimeric head-to-tail polymers. Ultimately, two head-to-tail polymers assemble laterally into a protofilament with a uniformly shaped rod of 3.5 nm in diameter. Interacts with SPAG4 and SEPT12. Post-translationally, B-type lamins undergo a series of modifications, such as farnesylation and phosphorylation. Increased phosphorylation of the lamins occurs before envelope disintegration and probably plays a role in regulating lamin associations. Phosphorylation plays a key role in lamin organization, subcellular localization and nuclear envelope disintegration. Phosphorylation by CDK1 at Ser-23 and Ser-393 at the onset of mitosis drives lamin disassembly and nuclear envelope breakdown.

It localises to the nucleus lamina. In terms of biological role, lamins are intermediate filament proteins that assemble into a filamentous meshwork, and which constitute the major components of the nuclear lamina, a fibrous layer on the nucleoplasmic side of the inner nuclear membrane. Lamins provide a framework for the nuclear envelope, bridging the nuclear envelope and chromatin, thereby playing an important role in nuclear assembly, chromatin organization, nuclear membrane and telomere dynamics. The structural integrity of the lamina is strictly controlled by the cell cycle, as seen by the disintegration and formation of the nuclear envelope in prophase and telophase, respectively. This is Lamin-B1 (Lmnb1) from Rattus norvegicus (Rat).